The chain runs to 1173 residues: Thrombospondin-1 (1173 aa).

A signal peptide spans 1–18 (MKGIFLLLMLVMPQTHQA). The 203-residue stretch at 22-224 (GNDDNSVFDL…LQNVRFVFGT (203 aa)) folds into the Laminin G-like domain. Residues 50-98 (HLVKGPDPSSPAYRIEDADLIPPLPEDKFQDLLDAIRADRGFILLATLR) are heparin-binding. Asn-155 and Asn-158 each carry an N-linked (GlcNAc...) asparagine glycan. A disulfide bond links Cys-174 and Cys-235. 2 N-linked (GlcNAc...) asparagine glycosylation sites follow: Asn-250 and Asn-363. In terms of domain architecture, VWFC spans 319 to 376 (GVCLHNGVLHKNRDEWTVDSCTECTCQNSATICRKVSCPLMPCTNATIPDGECCPRCW). TSP type-1 domains follow at residues 382-432 (DDDW…QDCD), 438-493 (DGGW…DPCP), and 495-550 (NGQW…QDCP). 18 disulfides stabilise this stretch: Cys-394–Cys-426, Cys-398–Cys-431, Cys-409–Cys-416, Cys-450–Cys-487, Cys-454–Cys-492, Cys-465–Cys-477, Cys-507–Cys-544, Cys-511–Cys-549, Cys-522–Cys-534, Cys-554–Cys-565, Cys-559–Cys-575, Cys-578–Cys-589, Cys-595–Cys-611, Cys-602–Cys-620, Cys-623–Cys-647, Cys-653–Cys-666, Cys-660–Cys-679, and Cys-681–Cys-692. The region spanning 550–590 (PIDGCLSNPCFAGVKCTSFIDGSWKCGSCPPGYRGNGITCK) is the EGF-like 1 domain. Residues 649-693 (PRNPCADGTHDCHKNARCIYLGHYSDPMFRCECRPGYAGNGIICG) enclose the EGF-like 2 domain. 8 TSP type-3 repeats span residues 694–729 (EDTD…NSGQ), 730–765 (EDYD…NPAQ), 766–788 (YDYD…NPDQ), 789–824 (ADTD…NVDQ), 825–847 (KDTD…NPEQ), 848–885 (TDSD…NANQ), 886–921 (ADHD…NPDQ), and 922–957 (TDTN…EIST). Residues Asn-705 and Asn-711 are each glycosylated (N-linked (GlcNAc...) asparagine). 9 disulfides stabilise this stretch: Cys-708–Cys-716, Cys-721–Cys-741, Cys-757–Cys-777, Cys-780–Cys-800, Cys-816–Cys-836, Cys-839–Cys-859, Cys-877–Cys-897, Cys-913–Cys-933, and Cys-949–Cys-1170. Residues 838-935 (NCPLEHNPEQ…GDGRGDACQY (98 aa)) are disordered. Residues 886–897 (ADHDKDGKGDAC) are compositionally biased toward basic and acidic residues. The Cell attachment site signature appears at 929–931 (RGD). The TSP C-terminal domain occupies 961-1173 (RKFQMVPLDP…SDLKYECRDS (213 aa)). N-linked (GlcNAc...) asparagine glycosylation is present at Asn-1070.

This sequence belongs to the thrombospondin family. As to quaternary structure, homotrimer; disulfide-linked.

Its subcellular location is the secreted. The protein resides in the cell surface. It is found in the extracellular space. The protein localises to the extracellular matrix. It localises to the endoplasmic reticulum. Its subcellular location is the sarcoplasmic reticulum. In terms of biological role, adhesive glycoprotein that mediates cell-to-cell and cell-to-matrix interactions. Can bind to fibrinogen, fibronectin, laminin, type V collagen and integrins alpha-V/beta-1, alpha-V/beta-3 and alpha-IIb/beta-3. May play a role in ER stress response. The polypeptide is Thrombospondin-1 (thbs1) (Xenopus laevis (African clawed frog)).